The chain runs to 228 residues: Auxin-responsive protein IAA14 (228 aa).

The EAR-like (transcriptional repression) signature appears at 8-12 (LCLGL). Residues 110–210 (VAFVKVSMDG…SCKRLRIMKG (101 aa)) form the PB1 domain.

The protein belongs to the Aux/IAA family. In terms of assembly, homodimers and heterodimers. Interacts with TPL. Preferentially expressed in roots and flowers.

It is found in the nucleus. Functionally, aux/IAA proteins are short-lived transcriptional factors that function as repressors of early auxin response genes at low auxin concentrations. Repression is thought to result from the interaction with auxin response factors (ARFs), proteins that bind to the auxin-responsive promoter element (AuxRE). Formation of heterodimers with ARF proteins may alter their ability to modulate early auxin response genes expression. The protein is Auxin-responsive protein IAA14 (IAA14) of Arabidopsis thaliana (Mouse-ear cress).